We begin with the raw amino-acid sequence, 261 residues long: Tryptophan synthase alpha chain (261 aa).

Residues glutamate 47 and aspartate 58 each act as proton acceptor in the active site.

Belongs to the TrpA family. Tetramer of two alpha and two beta chains.

It catalyses the reaction (1S,2R)-1-C-(indol-3-yl)glycerol 3-phosphate + L-serine = D-glyceraldehyde 3-phosphate + L-tryptophan + H2O. It participates in amino-acid biosynthesis; L-tryptophan biosynthesis; L-tryptophan from chorismate: step 5/5. Its function is as follows. The alpha subunit is responsible for the aldol cleavage of indoleglycerol phosphate to indole and glyceraldehyde 3-phosphate. This Neisseria meningitidis serogroup A / serotype 4A (strain DSM 15465 / Z2491) protein is Tryptophan synthase alpha chain.